The primary structure comprises 509 residues: Seipin-3 (509 aa).

Residues 33–73 (YDCLNSSPPANLRRRRLPMDTDSSSSSSTSSLESCEKRSTV) are disordered. Positions 52–63 (DTDSSSSSSTSS) are enriched in low complexity. 2 consecutive transmembrane segments (helical) span residues 238–258 (LFCA…AFMI) and 455–475 (LFVW…LVFF).

Belongs to the seipin family. Expressed in seeds, seedlings, leaves, stems and roots. Not detected in flowers.

It is found in the endoplasmic reticulum membrane. Functionally, involved in lipid metabolism and lipid droplet (LD) morphology, number, and size. Supports the formation of small-sized LDs and modulates triacylglycerol accumulation. Induces probably a reorganization of the endoplasmic reticulum into LD-forming domains. The sequence is that of Seipin-3 from Arabidopsis thaliana (Mouse-ear cress).